A 235-amino-acid chain; its full sequence is 2-C-methyl-D-erythritol 4-phosphate cytidylyltransferase (235 aa).

It belongs to the IspD/TarI cytidylyltransferase family. IspD subfamily. Homodimer.

It catalyses the reaction 2-C-methyl-D-erythritol 4-phosphate + CTP + H(+) = 4-CDP-2-C-methyl-D-erythritol + diphosphate. Its pathway is isoprenoid biosynthesis; isopentenyl diphosphate biosynthesis via DXP pathway; isopentenyl diphosphate from 1-deoxy-D-xylulose 5-phosphate: step 2/6. In terms of biological role, catalyzes the formation of 4-diphosphocytidyl-2-C-methyl-D-erythritol from CTP and 2-C-methyl-D-erythritol 4-phosphate (MEP). This chain is 2-C-methyl-D-erythritol 4-phosphate cytidylyltransferase, found in Blochmanniella pennsylvanica (strain BPEN).